The chain runs to 588 residues: Sulfite reductase [NADPH] hemoprotein beta-component (588 aa).

The span at 1 to 10 (MSDKKQKGLE) shows a compositional bias: basic and acidic residues. Residues 1-20 (MSDKKQKGLEWQDNPLSDNE) are disordered. C443, C449, C488, and C492 together coordinate [4Fe-4S] cluster. C492 serves as a coordination point for siroheme.

It belongs to the nitrite and sulfite reductase 4Fe-4S domain family. In terms of assembly, alpha(8)-beta(8). The alpha component is a flavoprotein, the beta component is a hemoprotein. Siroheme serves as cofactor. [4Fe-4S] cluster is required as a cofactor.

The enzyme catalyses hydrogen sulfide + 3 NADP(+) + 3 H2O = sulfite + 3 NADPH + 4 H(+). It participates in sulfur metabolism; hydrogen sulfide biosynthesis; hydrogen sulfide from sulfite (NADPH route): step 1/1. In terms of biological role, component of the sulfite reductase complex that catalyzes the 6-electron reduction of sulfite to sulfide. This is one of several activities required for the biosynthesis of L-cysteine from sulfate. The protein is Sulfite reductase [NADPH] hemoprotein beta-component of Mannheimia succiniciproducens (strain KCTC 0769BP / MBEL55E).